The sequence spans 499 residues: Lysine--tRNA ligase (499 aa).

Mg(2+)-binding residues include Glu409 and Glu416.

It belongs to the class-II aminoacyl-tRNA synthetase family. In terms of assembly, homodimer. Requires Mg(2+) as cofactor.

The protein resides in the cytoplasm. The enzyme catalyses tRNA(Lys) + L-lysine + ATP = L-lysyl-tRNA(Lys) + AMP + diphosphate. The protein is Lysine--tRNA ligase of Pseudomonas fluorescens (strain Pf0-1).